The primary structure comprises 860 residues: Transforming growth factor-beta receptor-associated protein 1 (860 aa).

The CNH domain maps to 24–297 (HISIECVECC…HILQDFEGRV (274 aa)). A CHCR repeat occupies 564 to 732 (RPLDEQQQTS…YLRAGPSAQD (169 aa)).

This sequence belongs to the TRAP1 family. In terms of assembly, interacts with TGFBR2 and ACVR2B; in the absence of ligand stimulation. Interacts with TGFBR1, ACVRL1, BMPR1A and ACVR1B; in the absence of ligand stimulation and to a less extent. Interacts with SMAD4; the interaction seems to be mutually exclusive with the interaction of SMAD4 and phosphorylated SMAD2. May interact with ALOX5. Interacts with RAB5C. Interacts with VPS8, VPS11 and VPS16. Component of the putative class C core vacuole/endosome tethering (CORVET) complex; the core of which composed of the class C Vps proteins VPS11, VPS16, VPS18 and VPS33A, is associated with VPS8 and TGFBRAP1.

The protein localises to the cytoplasm. It localises to the early endosome. Plays a role in the TGF-beta/activin signaling pathway. It associates with inactive heteromeric TGF-beta and activin receptor complexes, mainly through the type II receptor, and is released upon activation of signaling. May recruit SMAD4 to the vicinity of the receptor complex and facilitate its interaction with receptor-regulated Smads, such as SMAD2. Functionally, plays a role in vesicle-mediated protein trafficking of the endocytic membrane transport pathway. Believed to act as a component of the putative CORVET endosomal tethering complexes which is proposed to be involved in the Rab5-to-Rab7 endosome conversion probably implicating MON1A/B, and via binding SNAREs and SNARE complexes to mediate tethering and docking events during SNARE-mediated membrane fusion. The CORVET complex is proposed to function as a Rab5 effector to mediate early endosome fusion probably in specific endosome subpopulations. Functions predominantly in APPL1-containing endosomes and in degradative but not recycling trafficking of endocytosed cargo. The polypeptide is Transforming growth factor-beta receptor-associated protein 1 (Tgfbrap1) (Mus musculus (Mouse)).